A 294-amino-acid chain; its full sequence is Aquaporin NIP2-2 (294 aa).

A run of 2 helical transmembrane segments spans residues V54–I74 and S88–A108. Residues N111–A113 carry the NPA 1 motif. 3 helical membrane-spanning segments follow: residues V129–L151, A169–T189, and L197–S217. The NPA 2 motif lies at N222–A224. A helical transmembrane segment spans residues V235–W255.

This sequence belongs to the MIP/aquaporin (TC 1.A.8) family. NIP (TC 1.A.8.12) subfamily.

The protein localises to the membrane. In terms of biological role, aquaporins facilitate the transport of water and small neutral solutes across cell membranes. The polypeptide is Aquaporin NIP2-2 (NIP2-2) (Zea mays (Maize)).